Here is a 761-residue protein sequence, read N- to C-terminus: Phosphoribosylformylglycinamidine synthase subunit PurL (761 aa).

Residues 1–16 show a composition bias toward low complexity; the sequence is MTGNPAAPAATSVSPP. Positions 1–21 are disordered; it reads MTGNPAAPAATSVSPPAEQPY. Residue H57 is part of the active site. Y60 and K101 together coordinate ATP. Residue E103 participates in Mg(2+) binding. Substrate contacts are provided by residues 104 to 107 and R126; that span reads SHNH. The Proton acceptor role is filled by H105. D127 is a binding site for Mg(2+). Q252 is a substrate binding site. D280 serves as a coordination point for Mg(2+). Residue 329–331 participates in substrate binding; that stretch reads ESQ. Positions 519 and 556 each coordinate ATP. N557 is a Mg(2+) binding site. Position 559 (S559) interacts with substrate.

The protein belongs to the FGAMS family. Monomer. Part of the FGAM synthase complex composed of 1 PurL, 1 PurQ and 2 PurS subunits.

It localises to the cytoplasm. It carries out the reaction N(2)-formyl-N(1)-(5-phospho-beta-D-ribosyl)glycinamide + L-glutamine + ATP + H2O = 2-formamido-N(1)-(5-O-phospho-beta-D-ribosyl)acetamidine + L-glutamate + ADP + phosphate + H(+). Its pathway is purine metabolism; IMP biosynthesis via de novo pathway; 5-amino-1-(5-phospho-D-ribosyl)imidazole from N(2)-formyl-N(1)-(5-phospho-D-ribosyl)glycinamide: step 1/2. Part of the phosphoribosylformylglycinamidine synthase complex involved in the purines biosynthetic pathway. Catalyzes the ATP-dependent conversion of formylglycinamide ribonucleotide (FGAR) and glutamine to yield formylglycinamidine ribonucleotide (FGAM) and glutamate. The FGAM synthase complex is composed of three subunits. PurQ produces an ammonia molecule by converting glutamine to glutamate. PurL transfers the ammonia molecule to FGAR to form FGAM in an ATP-dependent manner. PurS interacts with PurQ and PurL and is thought to assist in the transfer of the ammonia molecule from PurQ to PurL. The polypeptide is Phosphoribosylformylglycinamidine synthase subunit PurL (Frankia casuarinae (strain DSM 45818 / CECT 9043 / HFP020203 / CcI3)).